The primary structure comprises 251 residues: Ubiquinone/menaquinone biosynthesis C-methyltransferase UbiE (251 aa).

S-adenosyl-L-methionine is bound by residues threonine 74, aspartate 95, 123-124, and serine 140; that span reads NA.

The protein belongs to the class I-like SAM-binding methyltransferase superfamily. MenG/UbiE family.

The catalysed reaction is a 2-demethylmenaquinol + S-adenosyl-L-methionine = a menaquinol + S-adenosyl-L-homocysteine + H(+). The enzyme catalyses a 2-methoxy-6-(all-trans-polyprenyl)benzene-1,4-diol + S-adenosyl-L-methionine = a 5-methoxy-2-methyl-3-(all-trans-polyprenyl)benzene-1,4-diol + S-adenosyl-L-homocysteine + H(+). The protein operates within quinol/quinone metabolism; menaquinone biosynthesis; menaquinol from 1,4-dihydroxy-2-naphthoate: step 2/2. It functions in the pathway cofactor biosynthesis; ubiquinone biosynthesis. Its function is as follows. Methyltransferase required for the conversion of demethylmenaquinol (DMKH2) to menaquinol (MKH2) and the conversion of 2-polyprenyl-6-methoxy-1,4-benzoquinol (DDMQH2) to 2-polyprenyl-3-methyl-6-methoxy-1,4-benzoquinol (DMQH2). In Pectobacterium atrosepticum (strain SCRI 1043 / ATCC BAA-672) (Erwinia carotovora subsp. atroseptica), this protein is Ubiquinone/menaquinone biosynthesis C-methyltransferase UbiE.